A 336-amino-acid chain; its full sequence is Fructose-1,6-bisphosphatase class 1 (336 aa).

Residues Glu90, Asp112, Leu114, and Asp115 each contribute to the Mg(2+) site. Residues 115-118 (DGSS), Asn211, and Lys277 contribute to the substrate site. Glu283 lines the Mg(2+) pocket.

The protein belongs to the FBPase class 1 family. As to quaternary structure, homotetramer. Mg(2+) is required as a cofactor.

It is found in the cytoplasm. It carries out the reaction beta-D-fructose 1,6-bisphosphate + H2O = beta-D-fructose 6-phosphate + phosphate. Its pathway is carbohydrate biosynthesis; gluconeogenesis. The sequence is that of Fructose-1,6-bisphosphatase class 1 from Pseudomonas entomophila (strain L48).